Here is a 225-residue protein sequence, read N- to C-terminus: Probable GTP-binding protein EngB (225 aa).

One can recognise an EngB-type G domain in the interval 31–204 (VGVEIAFAGR…LGILDSWCKP (174 aa)). Residues 39-46 (GRSNAGKS), 65-69 (GRTQL), 83-86 (DLPG), 150-153 (TKAD), and 183-185 (FSS) contribute to the GTP site. Mg(2+) contacts are provided by serine 46 and threonine 67.

This sequence belongs to the TRAFAC class TrmE-Era-EngA-EngB-Septin-like GTPase superfamily. EngB GTPase family. Requires Mg(2+) as cofactor.

Functionally, necessary for normal cell division and for the maintenance of normal septation. The polypeptide is Probable GTP-binding protein EngB (Shewanella pealeana (strain ATCC 700345 / ANG-SQ1)).